The primary structure comprises 1710 residues: Neurexin-2 (1710 aa).

The N-terminal stretch at 1–28 (MALGSRWQPPPQLPPLLLLLALAAGVRG) is a signal peptide. Residues 29–206 (LEFGGGPGQW…LRGAAADPLC (178 aa)) form the Laminin G-like 1 domain. At 29 to 1634 (LEFGGGPGQW…EVIRESSSTT (1606 aa)) the chain is on the extracellular side. An N-linked (GlcNAc...) asparagine glycan is attached at Asn-60. Residues 202 to 242 (ADPLCAPARNPCANGGLCTVLAPGEVGCDCSHTGFGGKFCS) form the EGF-like 1 domain. Disulfide bonds link Cys-206-Cys-219, Cys-213-Cys-229, and Cys-231-Cys-241. Laminin G-like domains are found at residues 289 to 486 (VATF…SFRC) and 493 to 686 (DPVT…APFC). Asp-335 is a Ca(2+) binding site. N-linked (GlcNAc...) asparagine glycosylation occurs at Asn-338. The Ca(2+) site is built by Leu-352 and Met-420. 5 cysteine pairs are disulfide-bonded: Cys-450/Cys-486, Cys-657/Cys-686, Cys-694/Cys-705, Cys-699/Cys-714, and Cys-716/Cys-726. Positions 690 to 727 (TLKQCASAPCRNGGICREGWNRFVCDCIGTGFLGRVCE) constitute an EGF-like 2 domain. Laminin G-like domains follow at residues 732–904 (VLSY…ITYC) and 918–1093 (DPVT…ERGC). Residues Asp-779 and Leu-796 each coordinate Ca(2+). A glycan (N-linked (GlcNAc...) asparagine) is linked at Asn-841. A Ca(2+)-binding site is contributed by Arg-854. Intrachain disulfides connect Cys-1065–Cys-1093, Cys-1100–Cys-1111, Cys-1105–Cys-1120, and Cys-1122–Cys-1132. Residues 1096-1133 (PSTTCTEESCANQGVCLQQWDGFTCDCTMTSYGGPVCN) form the EGF-like 3 domain. The 209-residue stretch at 1137 to 1345 (TTYIFGKGGA…HLRLVGEGPS (209 aa)) folds into the Laminin G-like 6 domain. The Ca(2+) site is built by Asp-1189, Val-1206, Ile-1288, and Asn-1290. A glycan (O-linked (Xyl...) (heparan sulfate) serine) is linked at Ser-1400. Disordered regions lie at residues 1458–1508 (ATQD…LPPT) and 1587–1621 (EPRRPPPLRPGVTSAPGFPRLPTANPTGPGERGPP). Residues 1635–1655 (GMVVGIVAAAALCILILLYAM) form a helical membrane-spanning segment. The Cytoplasmic segment spans residues 1656-1710 (YKYRNRDEGSYQVDQSRNYISNSAQSNGAVVKEKAPAAPKTPSKAKKNKDKEYYV). Positions 1677–1710 (NSAQSNGAVVKEKAPAAPKTPSKAKKNKDKEYYV) are disordered.

In terms of assembly, the laminin G-like domain 1 binds to NXPH1. Interacts with PATJ. Interacts with CBLN1, CBLN2 and, less avidly, with CBLN4. Specific isoforms bind neuroligins NLGN1, NLGN2 and NLGN3. Specific isoforms bind to alpha-dystroglycan. Interacts (via Laminin G-like 1 domain) with IGSF21 (Ig-like 1 domain) in a trans-interaction manner. Interacts with CLSTN3. O-glycosylated; contains heparan sulfate. Heparan sulfate attachment is required for synapse development by mediating interactions with neuroligins.

The protein resides in the presynaptic cell membrane. In terms of biological role, neuronal cell surface protein that may be involved in cell recognition and cell adhesion. May mediate intracellular signaling. This Mus musculus (Mouse) protein is Neurexin-2.